We begin with the raw amino-acid sequence, 523 residues long: 2-isopropylmalate synthase (523 aa).

In terms of domain architecture, Pyruvate carboxyltransferase spans 5-267; that stretch reads VIIFDTTLRD…HTNINHHEIW (263 aa). Residues Asp-14, His-202, His-204, and Asn-238 each coordinate Mn(2+). The segment at 392 to 523 is regulatory domain; the sequence is RLDYFSVQSG…QNKENNKETV (132 aa).

Belongs to the alpha-IPM synthase/homocitrate synthase family. LeuA type 1 subfamily. As to quaternary structure, homodimer. It depends on Mn(2+) as a cofactor.

It localises to the cytoplasm. It catalyses the reaction 3-methyl-2-oxobutanoate + acetyl-CoA + H2O = (2S)-2-isopropylmalate + CoA + H(+). The protein operates within amino-acid biosynthesis; L-leucine biosynthesis; L-leucine from 3-methyl-2-oxobutanoate: step 1/4. Catalyzes the condensation of the acetyl group of acetyl-CoA with 3-methyl-2-oxobutanoate (2-ketoisovalerate) to form 3-carboxy-3-hydroxy-4-methylpentanoate (2-isopropylmalate). This Klebsiella pneumoniae (strain 342) protein is 2-isopropylmalate synthase.